The chain runs to 213 residues: Nicolin-1 (213 aa).

As to quaternary structure, part of the neuronal tubulin polyglutamylase complex which contains TPGS1, TPGS2, TTLL1, LRRC49 and NICN1. As to expression, high expression level is found in brain, testis, liver and kidney. Weak expression in spleen, leukocytes, small intestin and colon.

The protein localises to the nucleus. The protein is Nicolin-1 (Nicn1) of Mus musculus (Mouse).